The chain runs to 727 residues: NADH-ubiquinone oxidoreductase 75 kDa subunit, mitochondrial (727 aa).

A mitochondrion-targeting transit peptide spans 1 to 23 (MLRIPVRKALVVLSKSPKGCVRT). Residues 30–108 (NLIEVFVDGQ…GWNILTNSKK (79 aa)) enclose the 2Fe-2S ferredoxin-type domain. [2Fe-2S] cluster contacts are provided by cysteine 64, cysteine 75, and cysteine 78. An N6-acetyllysine modification is found at lysine 84. Residue cysteine 92 participates in [2Fe-2S] cluster binding. A 4Fe-4S His(Cys)3-ligated-type domain is found at 108–147 (KSKKAREGVMEFLLANHPLDCPICDQGGECDLQDQSMMFG). Residues histidine 124, cysteine 128, cysteine 131, cysteine 137, cysteine 176, cysteine 179, cysteine 182, and cysteine 226 each contribute to the [4Fe-4S] cluster site. Residues 245 to 301 (TRKTESIDVMDAVGSNIVVSTRTGEVMRILPRMHEDINEEWISDKTRFAYDGLKRQR) form the 4Fe-4S Mo/W bis-MGD-type domain. An N6-acetyllysine mark is found at lysine 467, lysine 499, and lysine 709.

The protein belongs to the complex I 75 kDa subunit family. As to quaternary structure, core subunit of respiratory chain NADH dehydrogenase (Complex I) which is composed of 45 different subunits. This is the largest subunit of complex I and it is a component of the iron-sulfur (IP) fragment of the enzyme. Complex I associates with ubiquinol-cytochrome reductase complex (Complex III) to form supercomplexes. Interacts with MDM2 and AKAP1. The cofactor is [2Fe-2S] cluster. [4Fe-4S] cluster serves as cofactor.

It localises to the mitochondrion inner membrane. The enzyme catalyses a ubiquinone + NADH + 5 H(+)(in) = a ubiquinol + NAD(+) + 4 H(+)(out). Core subunit of the mitochondrial membrane respiratory chain NADH dehydrogenase (Complex I) which catalyzes electron transfer from NADH through the respiratory chain, using ubiquinone as an electron acceptor. Essential for catalysing the entry and efficient transfer of electrons within complex I. Plays a key role in the assembly and stability of complex I and participates in the association of complex I with ubiquinol-cytochrome reductase complex (Complex III) to form supercomplexes. This chain is NADH-ubiquinone oxidoreductase 75 kDa subunit, mitochondrial (NDUFS1), found in Pan troglodytes (Chimpanzee).